The primary structure comprises 85 residues: Small ribosomal subunit protein bS16c (85 aa).

The protein belongs to the bacterial ribosomal protein bS16 family.

It is found in the plastid. It localises to the chloroplast. The sequence is that of Small ribosomal subunit protein bS16c from Saccharum hybrid (Sugarcane).